We begin with the raw amino-acid sequence, 183 residues long: Apo-citrate lyase phosphoribosyl-dephospho-CoA transferase (183 aa).

Belongs to the CitX family.

The catalysed reaction is apo-[citrate lyase ACP] + 2'-(5''-triphospho-alpha-D-ribosyl)-3'-dephospho-CoA = holo-[citrate lyase ACP] + diphosphate. Functionally, transfers 2-(5''-triphosphoribosyl)-3'-dephosphocoenzyme-A on a serine residue to the apo-acyl carrier protein (gamma chain) of the citrate lyase to yield holo-acyl carrier protein. The sequence is that of Apo-citrate lyase phosphoribosyl-dephospho-CoA transferase from Escherichia coli (strain SMS-3-5 / SECEC).